We begin with the raw amino-acid sequence, 192 residues long: Mitochondrial import inner membrane translocase subunit TIM18 (192 aa).

The transit peptide at 1–42 (MLLFPGLKPVLNASTVIVNPVRAVFPGLVLSTKRSFYSINRL) directs the protein to the mitochondrion. Over 43–88 (NAENKINDIANTSKEASSSVQMFKPPEFSQFKDSYQKDYERIAKYT) the chain is Mitochondrial matrix. A helical transmembrane segment spans residues 89-109 (LIPLTMVPFYASFTGGVINPL). Residues 110–113 (LDAS) are Mitochondrial intermembrane-facing. A helical transmembrane segment spans residues 114-134 (LSSIFLIYLQYGFTSCIIDYI). The Mitochondrial matrix segment spans residues 135 to 144 (PKEKYPRWHK). The helical transmembrane segment at 145–165 (LALYCLYGGSMLSLYGIYELE) threads the bilayer. At 166 to 192 (TKNNGFVDLVKKLWNENDDHLYIFGRN) the chain is on the mitochondrial intermembrane side.

The protein belongs to the CybS family. As to quaternary structure, component of the TIM22 complex, whose core is composed of TIM18, TIM22 and TIM54, associated with the peripheral proteins MRS5/TIM12 and the 70 kDa heterohexamer composed of TIM9 and TIM10 (or TIM8 and TIM13).

It localises to the mitochondrion inner membrane. Functionally, component of the TIM22 complex, a complex that mediates the import and insertion of multi-pass transmembrane proteins into the mitochondrial inner membrane. The TIM22 complex forms a twin-pore translocase that uses the membrane potential as external driving force. Its role in the complex is unclear but it may be involved in the assembly and stabilization of the TIM22 complex. This Saccharomyces cerevisiae (strain ATCC 204508 / S288c) (Baker's yeast) protein is Mitochondrial import inner membrane translocase subunit TIM18 (TIM18).